The following is a 184-amino-acid chain: MKADKQLVSTSKFLSLVLRHQPGVIGMTLDEQGWLEIDGLIANANTRGKKLTLELIHEVVATNDKKRFVLSDDGLRIRASQGHSVAGVDLNLTEANPPATLYHGTVDAFLPRIREQGLQKRSRNHVHLSADEATATNVGSRRGKPKLLLIAAQRMHQDGHIFYLSENEVWLVDSVPPTYLTFPT.

Belongs to the KptA/TPT1 family.

Removes the 2'-phosphate from RNA via an intermediate in which the phosphate is ADP-ribosylated by NAD followed by a presumed transesterification to release the RNA and generate ADP-ribose 1''-2''-cyclic phosphate (APPR&gt;P). May function as an ADP-ribosylase. The polypeptide is Probable RNA 2'-phosphotransferase (Rhodopirellula baltica (strain DSM 10527 / NCIMB 13988 / SH1)).